The following is a 419-amino-acid chain: Creatine kinase S-type, mitochondrial (419 aa).

Residues 1-39 constitute a mitochondrion transit peptide; the sequence is MAGTFGRLLAGRVTAALFAAAGSGVLTTGYLLNQQNVKA. The Phosphagen kinase N-terminal domain maps to 46-132; that stretch reads KLFPPSADYP…FDPVIKARHN (87 aa). The region spanning 159–401 is the Phosphagen kinase C-terminal domain; it reads YVLSSRVRTG…NYLVDCEKKL (243 aa). ATP contacts are provided by residues 162–166, histidine 225, arginine 270, arginine 326, 354–359, and aspartate 369; these read SSRVR and RGTGGV.

This sequence belongs to the ATP:guanido phosphotransferase family. As to quaternary structure, exists as an octamer composed of four MTCK homodimers. In terms of tissue distribution, expressed in the leg muscle and heart.

It localises to the mitochondrion inner membrane. The catalysed reaction is creatine + ATP = N-phosphocreatine + ADP + H(+). Reversibly catalyzes the transfer of phosphate between ATP and various phosphogens (e.g. creatine phosphate). Creatine kinase isoenzymes play a central role in energy transduction in tissues with large, fluctuating energy demands, such as skeletal muscle, heart, brain and spermatozoa. The polypeptide is Creatine kinase S-type, mitochondrial (CKMT2) (Gallus gallus (Chicken)).